The chain runs to 313 residues: Autophagy-related protein 3 (313 aa).

Positions 103 to 125 (EDNDGWLATHGKPKDKGKEEDNL) are disordered. Over residues 114–123 (KPKDKGKEED) the composition is skewed to basic and acidic residues. Residue cysteine 258 is the Glycyl thioester intermediate of the active site.

Belongs to the ATG3 family. As to quaternary structure, interacts with ATG8 through an intermediate thioester bond between Cys-258 and the C-terminal Gly of ATG8. Also interacts with the C-terminal region of the E1-like ATG7 enzyme.

The protein resides in the cytoplasm. E2 conjugating enzyme responsible for the E2-like covalent binding of phosphatidylethanolamine to the C-terminal Gly of ATG8. This step is required for the membrane association of ATG8. The formation of the ATG8-phosphatidylethanolamine conjugate is essential for autophagy and for the cytoplasm to vacuole transport (Cvt). The sequence is that of Autophagy-related protein 3 (ATG3) from Arabidopsis thaliana (Mouse-ear cress).